Consider the following 214-residue polypeptide: Orotate phosphoribosyltransferase (214 aa).

Residues Arg125, Lys126, Lys129, His131, and 151-159 contribute to the 5-phospho-alpha-D-ribose 1-diphosphate site; that span reads EDTSTTGNS. Positions 155 and 183 each coordinate orotate.

This sequence belongs to the purine/pyrimidine phosphoribosyltransferase family. PyrE subfamily. In terms of assembly, homodimer. It depends on Mg(2+) as a cofactor.

The enzyme catalyses orotidine 5'-phosphate + diphosphate = orotate + 5-phospho-alpha-D-ribose 1-diphosphate. Its pathway is pyrimidine metabolism; UMP biosynthesis via de novo pathway; UMP from orotate: step 1/2. Functionally, catalyzes the transfer of a ribosyl phosphate group from 5-phosphoribose 1-diphosphate to orotate, leading to the formation of orotidine monophosphate (OMP). The polypeptide is Orotate phosphoribosyltransferase (Tropheryma whipplei (strain TW08/27) (Whipple's bacillus)).